The primary structure comprises 623 residues: Cilia- and flagella-associated protein 52 (623 aa).

11 WD repeats span residues 65-109 (GHGN…LMAR), 112-153 (LHKG…AICG), 159-198 (LNVG…RKIW), 291-330 (QLQG…ETLI), 333-372 (CHFE…ELLR), 375-414 (VPNM…LMYV), 418-457 (AHRI…QKLE), 462-501 (EHKS…RNQM), 503-544 (LANT…RELD), 546-585 (SLSG…VTHV), and 588-623 (GHSG…PFPS).

Belongs to the CFAP52 family. As to quaternary structure, microtubule inner protein component of sperm flagellar doublet microtubules. Interacts with BRCA2. Interacts with the CCT chaperonin complex. Interacts with HSP70. Interacts with AK8. Interacts with CFAP45. Interacts with DNAI1. Interacts with IQDC. Expressed in trachea multiciliated cells.

Its subcellular location is the cytoplasm. It localises to the cytoskeleton. It is found in the cilium axoneme. The protein resides in the flagellum axoneme. Functionally, microtubule inner protein (MIP) part of the dynein-decorated doublet microtubules (DMTs) in cilia axoneme. Important for proper ciliary and flagellar beating. May act in cooperation with CFAP45 and axonemal dynein subunit DNAH11. May play a role in cell growth and/or survival. The chain is Cilia- and flagella-associated protein 52 (CFAP52) from Bos taurus (Bovine).